We begin with the raw amino-acid sequence, 504 residues long: L-carnitine/gamma-butyrobetaine antiporter (504 aa).

Transmembrane regions (helical) follow at residues 10 to 30 (IEPK…WLTV), 51 to 71 (WGWA…WLVF), 92 to 112 (IFMM…SIEI), 143 to 163 (GPLP…FFFV), 195 to 215 (FYLV…TPLV), 231 to 251 (LDAI…ACGL), 263 to 283 (SYLS…SFIM), 316 to 336 (WTVF…IFLA), 347 to 367 (LCFG…TVLG), 403 to 423 (LSTA…VTLI), 446 to 466 (LLVR…LLAL), and 475 to 495 (AIIA…LSFI).

This sequence belongs to the BCCT transporter (TC 2.A.15) family. CaiT subfamily. In terms of assembly, homotrimer.

The protein localises to the cell inner membrane. It carries out the reaction 4-(trimethylamino)butanoate(in) + (R)-carnitine(out) = 4-(trimethylamino)butanoate(out) + (R)-carnitine(in). It participates in amine and polyamine metabolism; carnitine metabolism. Its function is as follows. Catalyzes the exchange of L-carnitine for gamma-butyrobetaine. The polypeptide is L-carnitine/gamma-butyrobetaine antiporter (Escherichia fergusonii (strain ATCC 35469 / DSM 13698 / CCUG 18766 / IAM 14443 / JCM 21226 / LMG 7866 / NBRC 102419 / NCTC 12128 / CDC 0568-73)).